A 160-amino-acid chain; its full sequence is Cytochrome b6-f complex subunit 4 (160 aa).

Transmembrane regions (helical) follow at residues Leu36 to Val56, Leu95 to Glu115, and Thr131 to Ile151.

The protein belongs to the cytochrome b family. PetD subfamily. The 4 large subunits of the cytochrome b6-f complex are cytochrome b6, subunit IV (17 kDa polypeptide, petD), cytochrome f and the Rieske protein, while the 4 small subunits are petG, petL, petM and petN. The complex functions as a dimer.

It is found in the plastid. Its subcellular location is the chloroplast thylakoid membrane. In terms of biological role, component of the cytochrome b6-f complex, which mediates electron transfer between photosystem II (PSII) and photosystem I (PSI), cyclic electron flow around PSI, and state transitions. This Amborella trichopoda protein is Cytochrome b6-f complex subunit 4.